We begin with the raw amino-acid sequence, 202 residues long: NADH-ubiquinone oxidoreductase chain 6 (202 aa).

A run of 5 helical transmembrane segments spans residues 1-21, 29-49, 52-72, 96-116, and 156-176; these read MVTMYFFTLSFGTVASGIMVI, SVFWLVVAFISSAALFILLGV, IALMFIIIYVGAIAILFLFVI, VPIGLAVGTLFFEAIASSWLI, and YYLFILVSFILLVAMLGAIVL.

This sequence belongs to the complex I subunit 6 family.

It is found in the mitochondrion membrane. The enzyme catalyses a ubiquinone + NADH + 5 H(+)(in) = a ubiquinol + NAD(+) + 4 H(+)(out). Its function is as follows. Core subunit of the mitochondrial membrane respiratory chain NADH dehydrogenase (Complex I) that is believed to belong to the minimal assembly required for catalysis. Complex I functions in the transfer of electrons from NADH to the respiratory chain. The immediate electron acceptor for the enzyme is believed to be ubiquinone. The protein is NADH-ubiquinone oxidoreductase chain 6 (ND6) of Metridium senile (Brown sea anemone).